Consider the following 344-residue polypeptide: Anthranilate phosphoribosyltransferase (344 aa).

Residues Gly86, 89–90, Thr94, 96–99, 114–122, and Ser126 contribute to the 5-phospho-alpha-D-ribose 1-diphosphate site; these read GD, NIST, and KHGNKSASG. Gly86 provides a ligand contact to anthranilate. Ser98 provides a ligand contact to Mg(2+). Asn117 provides a ligand contact to anthranilate. Arg172 is a binding site for anthranilate. Positions 231 and 232 each coordinate Mg(2+).

Belongs to the anthranilate phosphoribosyltransferase family. Homodimer. It depends on Mg(2+) as a cofactor.

It catalyses the reaction N-(5-phospho-beta-D-ribosyl)anthranilate + diphosphate = 5-phospho-alpha-D-ribose 1-diphosphate + anthranilate. The protein operates within amino-acid biosynthesis; L-tryptophan biosynthesis; L-tryptophan from chorismate: step 2/5. Catalyzes the transfer of the phosphoribosyl group of 5-phosphorylribose-1-pyrophosphate (PRPP) to anthranilate to yield N-(5'-phosphoribosyl)-anthranilate (PRA). The chain is Anthranilate phosphoribosyltransferase from Prochlorococcus marinus (strain AS9601).